The sequence spans 457 residues: Cation efflux system protein CusC (457 aa).

Positions 1 to 17 (MSPCKLLPFCVALALTG) are cleaved as a signal peptide. The N-palmitoyl cysteine moiety is linked to residue cysteine 18. Cysteine 18 is lipidated: S-diacylglycerol cysteine.

Belongs to the outer membrane factor (OMF) (TC 1.B.17) family. Homotrimer. Component of the cus efflux system composed of CusA, CusB, CusC and CusF.

Its subcellular location is the cell outer membrane. In terms of biological role, forms pores that allow passive diffusion of cations across the outer membrane. Part of a cation efflux system that mediates resistance to copper and silver. In pathogenic strains it allows the bacteria to invade brain microvascular endothelial cells (BMEC) thus allowing it to cross the blood-brain barrier and cause neonatal meningitis. In Escherichia coli (strain K12), this protein is Cation efflux system protein CusC (cusC).